A 634-amino-acid chain; its full sequence is GTP-binding protein 4 (634 aa).

A2 carries the post-translational modification N-acetylalanine. K103 is subject to N6-acetyllysine; alternate. K103 participates in a covalent cross-link: Glycyl lysine isopeptide (Lys-Gly) (interchain with G-Cter in SUMO2); alternate. At S122 the chain carries Phosphoserine. In terms of domain architecture, OBG-type G spans 169–340 (RTLLLCGYPN…VKTEACDRLL (172 aa)). Residues 175-182 (GYPNVGKS), 221-225 (DTPGI), and 289-292 (NKCD) contribute to the GTP site. K332 participates in a covalent cross-link: Glycyl lysine isopeptide (Lys-Gly) (interchain with G-Cter in SUMO2). Residues S468, S470, and S472 each carry the phosphoserine modification. The disordered stretch occupies residues 494-634 (KILQSKEKNK…KRKAGKKDRR (141 aa)). K534 participates in a covalent cross-link: Glycyl lysine isopeptide (Lys-Gly) (interchain with G-Cter in SUMO2). Over residues 544–554 (RRSRSVTRKRK) the composition is skewed to basic residues. At S558 the chain carries Phosphoserine. Residues 560-572 (PPSSTARSRSCSR) are compositionally biased toward low complexity. Over residues 573–585 (TPRDVSGLRDVKM) the composition is skewed to basic and acidic residues. Over residues 586–604 (VKKAKTMMKKAQKKMNRLG) the composition is skewed to basic residues. Residues 605-618 (KKGEADRHVFDMKP) show a composition bias toward basic and acidic residues. Positions 619-634 (KHLLSGKRKAGKKDRR) are enriched in basic residues.

This sequence belongs to the TRAFAC class OBG-HflX-like GTPase superfamily. OBG GTPase family. NOG subfamily. Associates with pre-60S ribosomal particles. Interacts with MINAS-60 (product of an alternative open reading frame of RBM10). In terms of tissue distribution, ubiquitous.

The protein localises to the nucleus. The protein resides in the nucleolus. In terms of biological role, involved in the biogenesis of the 60S ribosomal subunit. Acts as TP53 repressor, preventing TP53 stabilization and cell cycle arrest. In Mus musculus (Mouse), this protein is GTP-binding protein 4 (Gtpbp4).